A 319-amino-acid polypeptide reads, in one-letter code: Large ribosomal subunit protein eL8 (319 aa).

Lys-87 carries the post-translational modification N6-acetyllysine. Lys-101 is covalently cross-linked (Glycyl lysine isopeptide (Lys-Gly) (interchain with G-Cter in SUMO2)). At Lys-150 the chain carries N6-acetyllysine; alternate. Residue Lys-150 forms a Glycyl lysine isopeptide (Lys-Gly) (interchain with G-Cter in SUMO2); alternate linkage. Lys-178 is covalently cross-linked (Glycyl lysine isopeptide (Lys-Gly) (interchain with G-Cter in SUMO2)). Lys-270 is subject to N6-acetyllysine. Lys-298 participates in a covalent cross-link: Glycyl lysine isopeptide (Lys-Gly) (interchain with G-Cter in SUMO2).

This sequence belongs to the eukaryotic ribosomal protein eL8 family. In terms of assembly, component of the large ribosomal subunit. Interacts with CRY1. Interacts with DICER1, AGO2, TARBP2, MOV10 and EIF6; they form a large RNA-induced silencing complex (RISC).

The protein resides in the cytoplasm. Its function is as follows. Component of the large ribosomal subunit. The ribosome is a large ribonucleoprotein complex responsible for the synthesis of proteins in the cell. The protein is Large ribosomal subunit protein eL8 (RPL7A) of Oryctolagus cuniculus (Rabbit).